A 120-amino-acid chain; its full sequence is Phosphoribosyl-ATP pyrophosphatase (120 aa).

It belongs to the PRA-PH family.

The protein localises to the cytoplasm. The enzyme catalyses 1-(5-phospho-beta-D-ribosyl)-ATP + H2O = 1-(5-phospho-beta-D-ribosyl)-5'-AMP + diphosphate + H(+). The protein operates within amino-acid biosynthesis; L-histidine biosynthesis; L-histidine from 5-phospho-alpha-D-ribose 1-diphosphate: step 2/9. This Methylibium petroleiphilum (strain ATCC BAA-1232 / LMG 22953 / PM1) protein is Phosphoribosyl-ATP pyrophosphatase.